We begin with the raw amino-acid sequence, 315 residues long: Putative pyruvate, phosphate dikinase regulatory protein (315 aa).

The interval 1–32 (MGPFGARASPEAGQVVKQPLTDDPQESLAQGE) is disordered. Residue 189–196 (GVSRTSKT) participates in ADP binding.

This sequence belongs to the pyruvate, phosphate/water dikinase regulatory protein family. PDRP subfamily.

It catalyses the reaction N(tele)-phospho-L-histidyl/L-threonyl-[pyruvate, phosphate dikinase] + ADP = N(tele)-phospho-L-histidyl/O-phospho-L-threonyl-[pyruvate, phosphate dikinase] + AMP + H(+). The enzyme catalyses N(tele)-phospho-L-histidyl/O-phospho-L-threonyl-[pyruvate, phosphate dikinase] + phosphate + H(+) = N(tele)-phospho-L-histidyl/L-threonyl-[pyruvate, phosphate dikinase] + diphosphate. In terms of biological role, bifunctional serine/threonine kinase and phosphorylase involved in the regulation of the pyruvate, phosphate dikinase (PPDK) by catalyzing its phosphorylation/dephosphorylation. This Caulobacter vibrioides (strain ATCC 19089 / CIP 103742 / CB 15) (Caulobacter crescentus) protein is Putative pyruvate, phosphate dikinase regulatory protein.